The following is a 164-amino-acid chain: V-type proton ATPase subunit c' (164 aa).

The Lumenal segment spans residues 1-16; it reads MDMVASDNVYAPLYAP. Residues 17 to 37 traverse the membrane as a helical segment; the sequence is FFGFAGCALAMILSCLGAAIG. Residues 38 to 59 lie on the Cytoplasmic side of the membrane; sequence TAKSGIGIAGIGTFKPELIMKS. The chain crosses the membrane as a helical span at residues 60–80; sequence LIPVVMSGILAIYGLVVAVLI. Residues 81–98 are Lumenal-facing; that stretch reads AGNLSPTEEYTLFNGFMH. Residues 99 to 119 form a helical membrane-spanning segment; the sequence is LSCGLCVGFACLSSGYAIGIV. The Cytoplasmic segment spans residues 120–136; that stretch reads GDVGVRKYMHQPRLFVG. Residues 137–157 traverse the membrane as a helical segment; that stretch reads IVLILIFSEVLGLYGMIIALI. The Lumenal portion of the chain corresponds to 158-164; sequence LNTKGSE.

It belongs to the V-ATPase proteolipid subunit family. In terms of assembly, V-ATPase is a heteromultimeric enzyme composed of a peripheral catalytic V1 complex (components A to H) attached to an integral membrane V0 proton pore complex (components: a, c, c', c'', d, e, f and VOA1). The decameric c-ring forms the proton-conducting pore, and is composed of eight proteolipid subunits c, one subunit c' and one subunit c''.

It is found in the vacuole membrane. Proton-conducting pore forming subunit of the V0 complex of vacuolar(H+)-ATPase (V-ATPase), a multisubunit enzyme composed of a peripheral complex (V1) that hydrolyzes ATP and a membrane integral complex (V0) that translocates protons. V-ATPase is responsible for acidifying and maintaining the pH of intracellular compartments. The polypeptide is V-type proton ATPase subunit c' (VMA11) (Candida glabrata (strain ATCC 2001 / BCRC 20586 / JCM 3761 / NBRC 0622 / NRRL Y-65 / CBS 138) (Yeast)).